The primary structure comprises 76 residues: U14-hexatoxin-Hi1a (76 aa).

A signal peptide spans 1 to 18; sequence MMQLAVLICLSLVVNTFA. 3 disulfide bridges follow: Cys-21/Cys-34, Cys-27/Cys-39, and Cys-33/Cys-61.

As to expression, expressed by the venom gland.

Its subcellular location is the secreted. In terms of biological role, probable ion channel inhibitor. This chain is U14-hexatoxin-Hi1a, found in Hadronyche infensa (Fraser island funnel-web spider).